Reading from the N-terminus, the 309-residue chain is Protein RTM1 (309 aa).

7 helical membrane-spanning segments follow: residues 22-42, 83-103, 119-139, 162-182, 193-213, 233-253, and 278-298; these read AIAL…QVVW, TFSA…GYIA, IQAV…YMLF, FFVF…GLMA, LITA…INEF, WWFL…RSIV, and AVPM…GNIF.

It belongs to the lipid-translocating exporter (LTE) (TC 9.A.26.1) family.

The protein localises to the membrane. Its function is as follows. Confers resistance to molasses (to a particular toxic element present in some molasses). The protein is Protein RTM1 (RTM1) of Saccharomyces cerevisiae (Baker's yeast).